A 1699-amino-acid chain; its full sequence is MTKENQIVLDERVKENQHLQEEEKLALDAVYLNQITYIKAHWHVWVPTNCHILLKALDSCFLNGDPLGKSKLSVILHVKCSEDYPQRKPAVDLLDPQGLSKEDVQNLLTILRQMADTWEGCVVIAELAHRVREFLTDHTPRPAGSFHDDMLANKVRTEAEKQRKRLDTEQKELELLEEEMRQRNAIEMEKTLNGTRQENETRIIGGRRIVVLSNMPNTQLLISEWTFRFSSNRNPAEGKRKDFAPFLQKLDAVYNEIQKLCEIKGLDQNLVEYAFVHLQKISVSPDQILIQLNVAQKIFSSEENMQDTYELIVQKSNLLRLLAAQAICGLRYLHEASMTHKHLTLGSVWTRNSTGDCVFRFSDFGSMGPLLDLVKMFGDICSGKYVARDEDKEKEYDRRRKDLFQLGTLLDGLILATRGSTYSRVPTPVEGNQNTGTNLLGNFIAKCQEAKNIDQLVEDPFLKEECQSESENIFTPFGGAMSPDGRMLADNVIIRVLGRGGFGDVVLVRNKMDSTDYAIKRIPLNAKSDKLNRKIAKEAKFFAKLNHPNMVRYYYAWAEDLIPIVEETSDDDSSLGAVPIPGKEKIGKKGKLKTGKSLEDKENKANLGGGDSLMPMNLRGLVKDHSIGVDAKEWSTPFGKPEGPKCASRMRQSKRSTPSGGLKHLSECSSDDEDDDDSSEIDWDAESEEVEDEESDDSDEEDEDDGERLVQLNTETSTGADSVFERSTADEDVVFTAESEDLNAKRRESIELMEINTTTTSKSKLAIDVVPVRKPRILCIQMEYCDRATLRQYIDENHCFNAPTEVWRIFSEVLCGLKYMHDMAMIHRDIKPLNIFLTSQNGVKIGDFGLATLEAMSSKGKIVGGAAEKSTSIEAMLSPNGVKSKGSDVHQTRDIGTQLYMAPELFVDELVHKAPYTSKIDIYSAGVVLFEMFYRPLPPSMDRVSTLNNLRDDIKIPSDFGAGLAAPMAGLARRTVEKMLQRNPDERPTADDLLNDEDLPMHTKEDATFRNLCEKVIKKRDGRMNAWLLDKQFKEEVPTSLNYCYDVDICLERAKYNNREVLVETLRAEFCKILKIHSFEKLHTHTLMPVSTALAAASVRTKPVEVLDRSGVPVALPMDLRQNFVRFCVRNSVQRMKRFNFGRVYSQTSANGHPHERWECCVDCIGPQCSSPSLEAELLLVACEMMIGSLPGMKFTLKIGHAQLIEAQIRHLKLSDDVRAELLDALHLISVSDRPHSHKEKMDMLTPKIGAKAANIITKLLIPVEDNFGAFKEKVACFRKKLKVDAARVLVDKAIRDLEEIVGTFKFCRTEAIEQISIVYDSQTCYRPRTFGDGLLFQIQVEKPSTIANNKRGRRQNVLAGGRYDSALLRERHPRDFVYEIPLCISGFGVAMDVVSQIRDSINKSANIPKTPQNHCKVLICSMVQPDGSNLITQKFELAKKLWSMGIEADVFHIPVDDLESLTEHRNRASITHILAVYNTLNEVICKTETSSETMDVDSAISSVWRGVQALDGQSIHMTPCGGGPISSISTPGEAHHHDDHHPGTPVIASKCFRSSVSTTVATTSIRPISATVANLNVILVTSADRFHKVMKEKKRVESQVRNHLTEFVAHFTSKTRIEVLVCDIPADVIKKIVSELTKTSSEAEIDKLFDQLIQKHGKVDLSPLRRQFHITLNGISTGSAQVAILFYRQSDNFYRYLV.

In terms of domain architecture, RWD spans 22-138 (EEKLALDAVY…HRVREFLTDH (117 aa)). 2 Protein kinase domains span residues 108–507 (LTIL…DVVL) and 508–999 (VRNK…DEDL). ATP-binding positions include 114–122 (MADTWEGCV), lysine 154, 497–505 (LGRGGFGDV), and lysine 520. Disordered regions lie at residues 572 to 615 (DSSL…SLMP) and 632 to 725 (KEWS…SVFE). The segment covering 669-706 (SSDDEDDDDSSEIDWDAESEEVEDEESDDSDEEDEDDG) has biased composition (acidic residues). Residues 711–720 (QLNTETSTGA) show a composition bias toward polar residues. Aspartate 829 (proton acceptor) is an active-site residue.

It belongs to the protein kinase superfamily. Ser/Thr protein kinase family. GCN2 subfamily.

It catalyses the reaction L-seryl-[protein] + ATP = O-phospho-L-seryl-[protein] + ADP + H(+). The enzyme catalyses L-threonyl-[protein] + ATP = O-phospho-L-threonyl-[protein] + ADP + H(+). Serine/threonine-protein kinase which phosphorylates the alpha subunit of eukaryotic translation-initiation factor 2 (eIF2alpha), leading to its inactivation and thus to a rapid reduction of translational initiation and repression of global protein synthesis. Involved in the unfolded protein response (UPR) triggered by several stresses including mitochondrial, osmotic and oxidative stresses, amino acid deprivation and UV irradiation, probably by phosphorylating and inhibiting eIF2alpha. In addition, leads to the selective translation/transcription of some mRNA including atf-5, pha-4 and gpdh-1 which are part of the UPR. Required for maintaining lifespan during amino acid starvation. Involved in hypoxia-mediated adaptive protective response. The protein is Eukaryotic translation initiation factor 2-alpha kinase gcn-2 of Caenorhabditis elegans.